Here is a 384-residue protein sequence, read N- to C-terminus: 8-amino-7-oxononanoate synthase (384 aa).

R21 contacts substrate. 108–109 contributes to the pyridoxal 5'-phosphate binding site; sequence GF. H133 contacts substrate. Pyridoxal 5'-phosphate is bound by residues S179, H207, and T233. At K236 the chain carries N6-(pyridoxal phosphate)lysine. Residue T350 participates in substrate binding.

This sequence belongs to the class-II pyridoxal-phosphate-dependent aminotransferase family. BioF subfamily. As to quaternary structure, homodimer. Pyridoxal 5'-phosphate is required as a cofactor.

It catalyses the reaction 6-carboxyhexanoyl-[ACP] + L-alanine + H(+) = (8S)-8-amino-7-oxononanoate + holo-[ACP] + CO2. The protein operates within cofactor biosynthesis; biotin biosynthesis. Catalyzes the decarboxylative condensation of pimeloyl-[acyl-carrier protein] and L-alanine to produce 8-amino-7-oxononanoate (AON), [acyl-carrier protein], and carbon dioxide. The sequence is that of 8-amino-7-oxononanoate synthase from Erwinia tasmaniensis (strain DSM 17950 / CFBP 7177 / CIP 109463 / NCPPB 4357 / Et1/99).